A 100-amino-acid chain; its full sequence is Small ribosomal subunit protein uS14c (100 aa).

The protein belongs to the universal ribosomal protein uS14 family. As to quaternary structure, part of the 30S ribosomal subunit.

Its subcellular location is the plastid. It is found in the chloroplast. In terms of biological role, binds 16S rRNA, required for the assembly of 30S particles. The chain is Small ribosomal subunit protein uS14c from Mesostigma viride (Green alga).